Here is a 114-residue protein sequence, read N- to C-terminus: Histone H3-7 (114 aa).

Basic residues predominate over residues 1 to 17 (NTGGKAPRKHIAHKQAK). Residues 1–32 (NTGGKAPRKHIAHKQAKKSSAAAATGGVKKPH) form a disordered region. Residues 18–28 (KSSAAAATGGV) show a composition bias toward low complexity.

It belongs to the histone H3 family. In terms of assembly, the nucleosome is a histone octamer containing two molecules each of H2A, H2B, H3 and H4 assembled in one H3-H4 heterotetramer and two H2A-H2B heterodimers. The octamer wraps approximately 147 bp of DNA.

Its subcellular location is the nucleus. The protein resides in the chromosome. Core component of nucleosome. Nucleosomes wrap and compact DNA into chromatin, limiting DNA accessibility to the cellular machineries which require DNA as a template. Histones thereby play a central role in transcription regulation, DNA repair, DNA replication and chromosomal stability. DNA accessibility is regulated via a complex set of post-translational modifications of histones, also called histone code, and nucleosome remodeling. This is Histone H3-7 (H3-7) from Stylonychia lemnae (Ciliate).